A 219-amino-acid polypeptide reads, in one-letter code: Protein-L-isoaspartate O-methyltransferase (219 aa).

S60 is a catalytic residue.

It belongs to the methyltransferase superfamily. L-isoaspartyl/D-aspartyl protein methyltransferase family.

Its subcellular location is the cytoplasm. It catalyses the reaction [protein]-L-isoaspartate + S-adenosyl-L-methionine = [protein]-L-isoaspartate alpha-methyl ester + S-adenosyl-L-homocysteine. Functionally, catalyzes the methyl esterification of L-isoaspartyl residues in peptides and proteins that result from spontaneous decomposition of normal L-aspartyl and L-asparaginyl residues. It plays a role in the repair and/or degradation of damaged proteins. This chain is Protein-L-isoaspartate O-methyltransferase, found in Rhodospirillum rubrum (strain ATCC 11170 / ATH 1.1.1 / DSM 467 / LMG 4362 / NCIMB 8255 / S1).